A 211-amino-acid chain; its full sequence is Ribonuclease T (211 aa).

An Exonuclease domain is found at 24 to 198; that stretch reads VVVDVETGGF…YDAEKTAHLF (175 aa). Mg(2+)-binding residues include Asp27, Glu29, His185, and Asp190. His185 acts as the Proton donor/acceptor in catalysis.

It belongs to the RNase T family. Homodimer. The cofactor is Mg(2+).

In terms of biological role, trims short 3' overhangs of a variety of RNA species, leaving a one or two nucleotide 3' overhang. Responsible for the end-turnover of tRNA: specifically removes the terminal AMP residue from uncharged tRNA (tRNA-C-C-A). Also appears to be involved in tRNA biosynthesis. This Xylella fastidiosa (strain Temecula1 / ATCC 700964) protein is Ribonuclease T.